Here is a 192-residue protein sequence, read N- to C-terminus: Neurogenic differentiation factor 1 (192 aa).

Residues valine 19–leucine 71 form the bHLH domain. Positions proline 116–proline 192 are disordered. Positions serine 139–serine 163 are enriched in low complexity.

Expressed in neuroblasts of the AB lineage. More specifically in precursors of the embryonic ventral cord motor neurons. Expressed to a lesser degree in the EMS lineage which generates mostly endoderm and mesoderm tissues.

It localises to the nucleus. Acts as a transcriptional regulator whose activity is required for several aspects of motor neuron fate specification, including cell division patterns, proper spatiotemporal expression of fate-specific markers, and normal axonal morphology and pathfinding. Involved in regulating glial specification. This Caenorhabditis elegans protein is Neurogenic differentiation factor 1 (cnd-1).